The primary structure comprises 161 residues: MQANSRAYFLLIAFISFGLVGFALYLQFEKGYQPCPLCIMQRFAFIGIGLFSLLAVIAQNTRSLWQGLGMLSGVGGIAVAVYHVSLLLNPKASCGIDPLENWVNALPTAKVLPQVFYSDGLCTAPLPPVLGLSVPAWSLIWLFILTLTLAVGLIRREKNFR.

Topologically, residues methionine 1–tyrosine 8 are cytoplasmic. A helical transmembrane segment spans residues phenylalanine 9–tyrosine 25. Residues leucine 26–phenylalanine 43 are Periplasmic-facing. A disulfide bridge connects residues cysteine 35 and cysteine 38. A helical membrane pass occupies residues alanine 44–alanine 58. The Cytoplasmic segment spans residues glutamine 59–serine 63. The helical transmembrane segment at leucine 64–valine 81 threads the bilayer. The Periplasmic portion of the chain corresponds to tyrosine 82–alanine 136. Cysteines 94 and 122 form a disulfide. A helical transmembrane segment spans residues tryptophan 137 to arginine 155. At arginine 156 to arginine 161 the chain is on the cytoplasmic side.

It belongs to the DsbB family.

The protein localises to the cell inner membrane. Required for disulfide bond formation in some periplasmic proteins. Acts by oxidizing the DsbA protein. This chain is Disulfide bond formation protein B, found in Cupriavidus pinatubonensis (strain JMP 134 / LMG 1197) (Cupriavidus necator (strain JMP 134)).